A 123-amino-acid chain; its full sequence is Beta-defensin 126 (123 aa).

Residues 1–20 (MKSLLFTLAVFMLLAQLVSG) form the signal peptide. The segment at 21–63 (NLYVKRCLNDIGICKKTCKPEEVRSEHGWVMCGKRKACCVPAD) is in vitro binds to LPS, mediates antimicrobial activity and inhibits LPS-mediated inflammation. 3 disulfides stabilise this stretch: C27/C58, C34/C52, and C38/C59.

This sequence belongs to the beta-defensin family. Homodimer or homooligomer; disulfide-linked. O-glycosylated; glycans contain sialic acids alpha(2,3)-linked to galactose and N-acetylgalactosamine. The C-terminal O-glycosylation contributes substantially to the sperm glyocalyx. As to expression, high-level and epididymis-specific expression. Detected in epithelial cells lining the efferent ductules, initial segment, and cauda regions of the epididymis, but not on spermatozoa.

It is found in the secreted. In terms of biological role, highly glycosylated atypical beta-defensin involved in several aspects of sperm function. Facilitates sperm transport in the female reproductive tract and contributes to sperm protection against immunodetection; both functions are probably implicating the negative surface charge provided by its O-linked oligosaccharides in the sperm glycocalyx. Involved in binding of sperm to oviductal epithelial cells to form a sperm reservoir until ovulation. Release from the sperm surface during capacitation and ovaluation by an elevation of oviductal fluid pH is unmasking other surface components and allows sperm to penetrate the cumulus matrix and bind to the zona pellucida of the oocyte. In vitro has antimicrobial activity and may inhibit LPS-mediated inflammation. The sequence is that of Beta-defensin 126 (DEFB126) from Macaca fascicularis (Crab-eating macaque).